The primary structure comprises 306 residues: Latrophilin receptor-like protein A (306 aa).

Over 1-15 (MPSQLLNTVLSYLTD) the chain is Extracellular. Residues 16 to 36 (ILLSLSIVGSFLTIFTFMLYP) traverse the membrane as a helical segment. Topologically, residues 37–41 (KLRSY) are cytoplasmic. A helical transmembrane segment spans residues 42 to 62 (PIKLIIYLCMSIVFSLFFFEI). The Extracellular portion of the chain corresponds to 63–70 (SFRSSNSL). Residues 71–91 (FCIPAAILVHYFFLANFFWTF) traverse the membrane as a helical segment. The Cytoplasmic portion of the chain corresponds to 92–113 (SVSFNFFQMIVKRNRDSEFYER). A helical membrane pass occupies residues 114–134 (YYHLISWGIPFIIIIFCAAFK). The Extracellular portion of the chain corresponds to 135–152 (KYVDRGGFCYLEDQYSVY). A helical transmembrane segment spans residues 153 to 173 (FGFFMPGVIIVCSNICIYVFV). Residues 174 to 196 (AKEIYKTLRHTPTQKRQTVKEFR) lie on the Cytoplasmic side of the membrane. A helical transmembrane segment spans residues 197-217 (VYFSIFVSIGSSWIFGFIYMF). The Extracellular segment spans residues 218–222 (SDSNS). Residues 223–243 (IIGYIFLILFSISTSLQGFFI) form a helical membrane-spanning segment. Over 244 to 306 (FISYCLNYKV…TTTTTNVYSA (63 aa)) the chain is Cytoplasmic. Positions 279–306 (TTQSGPTGTTDSSSTMTSTTTTTNVYSA) are disordered.

Belongs to the G-protein coupled receptor 2 family. LN-TM7 subfamily.

The protein localises to the membrane. The chain is Latrophilin receptor-like protein A (lrlA) from Dictyostelium discoideum (Social amoeba).